Consider the following 279-residue polypeptide: 4-hydroxy-3-methylbut-2-enyl diphosphate reductase (279 aa).

[4Fe-4S] cluster is bound at residue cysteine 12. Positions 42 and 74 each coordinate (2E)-4-hydroxy-3-methylbut-2-enyl diphosphate. 2 residues coordinate dimethylallyl diphosphate: histidine 42 and histidine 74. Isopentenyl diphosphate-binding residues include histidine 42 and histidine 74. Residue cysteine 96 coordinates [4Fe-4S] cluster. Histidine 124 lines the (2E)-4-hydroxy-3-methylbut-2-enyl diphosphate pocket. A dimethylallyl diphosphate-binding site is contributed by histidine 124. Histidine 124 provides a ligand contact to isopentenyl diphosphate. Glutamate 126 (proton donor) is an active-site residue. Threonine 162 serves as a coordination point for (2E)-4-hydroxy-3-methylbut-2-enyl diphosphate. Cysteine 190 serves as a coordination point for [4Fe-4S] cluster. Serine 218, serine 219, asparagine 220, and serine 263 together coordinate (2E)-4-hydroxy-3-methylbut-2-enyl diphosphate. Dimethylallyl diphosphate-binding residues include serine 218, serine 219, asparagine 220, and serine 263. Residues serine 218, serine 219, asparagine 220, and serine 263 each coordinate isopentenyl diphosphate.

It belongs to the IspH family. [4Fe-4S] cluster serves as cofactor.

It carries out the reaction isopentenyl diphosphate + 2 oxidized [2Fe-2S]-[ferredoxin] + H2O = (2E)-4-hydroxy-3-methylbut-2-enyl diphosphate + 2 reduced [2Fe-2S]-[ferredoxin] + 2 H(+). It catalyses the reaction dimethylallyl diphosphate + 2 oxidized [2Fe-2S]-[ferredoxin] + H2O = (2E)-4-hydroxy-3-methylbut-2-enyl diphosphate + 2 reduced [2Fe-2S]-[ferredoxin] + 2 H(+). The protein operates within isoprenoid biosynthesis; dimethylallyl diphosphate biosynthesis; dimethylallyl diphosphate from (2E)-4-hydroxy-3-methylbutenyl diphosphate: step 1/1. Its pathway is isoprenoid biosynthesis; isopentenyl diphosphate biosynthesis via DXP pathway; isopentenyl diphosphate from 1-deoxy-D-xylulose 5-phosphate: step 6/6. Catalyzes the conversion of 1-hydroxy-2-methyl-2-(E)-butenyl 4-diphosphate (HMBPP) into a mixture of isopentenyl diphosphate (IPP) and dimethylallyl diphosphate (DMAPP). Acts in the terminal step of the DOXP/MEP pathway for isoprenoid precursor biosynthesis. The chain is 4-hydroxy-3-methylbut-2-enyl diphosphate reductase from Alkaliphilus oremlandii (strain OhILAs) (Clostridium oremlandii (strain OhILAs)).